A 290-amino-acid chain; its full sequence is Porphobilinogen deaminase (290 aa).

An S-(dipyrrolylmethanemethyl)cysteine modification is found at Cys237.

Belongs to the HMBS family. As to quaternary structure, monomer. Dipyrromethane serves as cofactor.

It catalyses the reaction 4 porphobilinogen + H2O = hydroxymethylbilane + 4 NH4(+). The protein operates within porphyrin-containing compound metabolism; protoporphyrin-IX biosynthesis; coproporphyrinogen-III from 5-aminolevulinate: step 2/4. In terms of biological role, tetrapolymerization of the monopyrrole PBG into the hydroxymethylbilane pre-uroporphyrinogen in several discrete steps. The sequence is that of Porphobilinogen deaminase from Clostridium botulinum (strain Langeland / NCTC 10281 / Type F).